The chain runs to 348 residues: Anthranilate phosphoribosyltransferase (348 aa).

5-phospho-alpha-D-ribose 1-diphosphate is bound by residues Gly83, 86–87, Thr91, 93–96, 111–119, and Thr123; these read GD, NVST, and KHGNRAASS. Residue Gly83 coordinates anthranilate. Ser95 serves as a coordination point for Mg(2+). Asn114 lines the anthranilate pocket. Arg169 contributes to the anthranilate binding site. 2 residues coordinate Mg(2+): Asp227 and Glu228.

It belongs to the anthranilate phosphoribosyltransferase family. As to quaternary structure, homodimer. Requires Mg(2+) as cofactor.

It carries out the reaction N-(5-phospho-beta-D-ribosyl)anthranilate + diphosphate = 5-phospho-alpha-D-ribose 1-diphosphate + anthranilate. It functions in the pathway amino-acid biosynthesis; L-tryptophan biosynthesis; L-tryptophan from chorismate: step 2/5. In terms of biological role, catalyzes the transfer of the phosphoribosyl group of 5-phosphorylribose-1-pyrophosphate (PRPP) to anthranilate to yield N-(5'-phosphoribosyl)-anthranilate (PRA). The protein is Anthranilate phosphoribosyltransferase of Thermobifida fusca (strain YX).